The following is a 421-amino-acid chain: tRNA(Ile)-lysidine synthase (421 aa).

26 to 31 (SGGADS) contributes to the ATP binding site.

The protein belongs to the tRNA(Ile)-lysidine synthase family.

The protein resides in the cytoplasm. The catalysed reaction is cytidine(34) in tRNA(Ile2) + L-lysine + ATP = lysidine(34) in tRNA(Ile2) + AMP + diphosphate + H(+). Ligates lysine onto the cytidine present at position 34 of the AUA codon-specific tRNA(Ile) that contains the anticodon CAU, in an ATP-dependent manner. Cytidine is converted to lysidine, thus changing the amino acid specificity of the tRNA from methionine to isoleucine. The polypeptide is tRNA(Ile)-lysidine synthase (Streptococcus thermophilus (strain CNRZ 1066)).